We begin with the raw amino-acid sequence, 77 residues long: Sec-independent protein translocase protein TatA (77 aa).

The chain crosses the membrane as a helical span at residues 1–21 (MGSFSIWHWLIVLVIVMLVFG). A disordered region spans residues 50 to 77 (ADASTQQKISGGQTLEGEAREKVEKTHS). The segment covering 53-62 (STQQKISGGQ) has biased composition (polar residues). Residues 66–77 (GEAREKVEKTHS) show a composition bias toward basic and acidic residues.

The protein belongs to the TatA/E family. The Tat system comprises two distinct complexes: a TatABC complex, containing multiple copies of TatA, TatB and TatC subunits, and a separate TatA complex, containing only TatA subunits. Substrates initially bind to the TatABC complex, which probably triggers association of the separate TatA complex to form the active translocon.

It localises to the cell inner membrane. Part of the twin-arginine translocation (Tat) system that transports large folded proteins containing a characteristic twin-arginine motif in their signal peptide across membranes. TatA could form the protein-conducting channel of the Tat system. The polypeptide is Sec-independent protein translocase protein TatA (Azoarcus sp. (strain BH72)).